The chain runs to 316 residues: Ribosomal RNA large subunit methyltransferase F (316 aa).

This sequence belongs to the methyltransferase superfamily. METTL16/RlmF family.

The protein resides in the cytoplasm. It carries out the reaction adenosine(1618) in 23S rRNA + S-adenosyl-L-methionine = N(6)-methyladenosine(1618) in 23S rRNA + S-adenosyl-L-homocysteine + H(+). In terms of biological role, specifically methylates the adenine in position 1618 of 23S rRNA. This Pseudomonas entomophila (strain L48) protein is Ribosomal RNA large subunit methyltransferase F.